The chain runs to 400 residues: NADH-quinone oxidoreductase subunit D (400 aa).

The protein belongs to the complex I 49 kDa subunit family. NDH-1 is composed of 14 different subunits. Subunits NuoB, C, D, E, F, and G constitute the peripheral sector of the complex.

The protein resides in the cell inner membrane. The enzyme catalyses a quinone + NADH + 5 H(+)(in) = a quinol + NAD(+) + 4 H(+)(out). In terms of biological role, NDH-1 shuttles electrons from NADH, via FMN and iron-sulfur (Fe-S) centers, to quinones in the respiratory chain. The immediate electron acceptor for the enzyme in this species is believed to be a menaquinone. Couples the redox reaction to proton translocation (for every two electrons transferred, four hydrogen ions are translocated across the cytoplasmic membrane), and thus conserves the redox energy in a proton gradient. The sequence is that of NADH-quinone oxidoreductase subunit D from Pelodictyon phaeoclathratiforme (strain DSM 5477 / BU-1).